A 127-amino-acid chain; its full sequence is Large ribosomal subunit protein eL32 (127 aa).

The span at 38 to 48 shows a compositional bias: basic and acidic residues; that stretch reads WRRPKGIDSKM. The interval 38-66 is disordered; sequence WRRPKGIDSKMRLKKKGKPRSPSIGWSSP.

Belongs to the eukaryotic ribosomal protein eL32 family.

The protein is Large ribosomal subunit protein eL32 of Thermococcus gammatolerans (strain DSM 15229 / JCM 11827 / EJ3).